The sequence spans 140 residues: Ribosome maturation factor RimP (140 aa).

It belongs to the RimP family.

The protein resides in the cytoplasm. Required for maturation of 30S ribosomal subunits. In Campylobacter jejuni subsp. jejuni serotype O:2 (strain ATCC 700819 / NCTC 11168), this protein is Ribosome maturation factor RimP.